Reading from the N-terminus, the 256-residue chain is Small ribosomal subunit protein eS1 (256 aa).

Basic residues predominate over residues 1 to 18 (MAVGKNKRLSKGKKGLKK). The disordered stretch occupies residues 1–22 (MAVGKNKRLSKGKKGLKKKTQD). The residue at position 2 (Ala-2) is an N-acetylalanine; partial.

The protein belongs to the eukaryotic ribosomal protein eS1 family. In terms of assembly, component of the small ribosomal subunit (SSU). Mature N.crassa ribosomes consist of a small (40S) and a large (60S) subunit. The 40S small subunit contains 1 molecule of ribosomal RNA (18S rRNA) and at least 32 different proteins. The large 60S subunit contains 3 rRNA molecules (26S, 5.8S and 5S rRNA) and at least 42 different proteins.

It localises to the cytoplasm. In terms of biological role, component of the ribosome, a large ribonucleoprotein complex responsible for the synthesis of proteins in the cell. The small ribosomal subunit (SSU) binds messenger RNAs (mRNAs) and translates the encoded message by selecting cognate aminoacyl-transfer RNA (tRNA) molecules. The large subunit (LSU) contains the ribosomal catalytic site termed the peptidyl transferase center (PTC), which catalyzes the formation of peptide bonds, thereby polymerizing the amino acids delivered by tRNAs into a polypeptide chain. The nascent polypeptides leave the ribosome through a tunnel in the LSU and interact with protein factors that function in enzymatic processing, targeting, and the membrane insertion of nascent chains at the exit of the ribosomal tunnel. The chain is Small ribosomal subunit protein eS1 (rps1) from Neurospora crassa (strain ATCC 24698 / 74-OR23-1A / CBS 708.71 / DSM 1257 / FGSC 987).